The primary structure comprises 736 residues: Catalase-peroxidase (736 aa).

A cross-link (tryptophyl-tyrosyl-methioninium (Trp-Tyr) (with M-250)) is located at residues 96–224 (WHSAGTYRTG…LAAVQMGLIY (129 aa)). Catalysis depends on His-97, which acts as the Proton acceptor. Residues 224–250 (YVNPEGPDGNPDPVASGRDVRETFGRM) constitute a cross-link (tryptophyl-tyrosyl-methioninium (Tyr-Met) (with W-96)). His-265 contributes to the heme b binding site.

This sequence belongs to the peroxidase family. Peroxidase/catalase subfamily. Homodimer or homotetramer. Heme b serves as cofactor. Formation of the three residue Trp-Tyr-Met cross-link is important for the catalase, but not the peroxidase activity of the enzyme.

It carries out the reaction H2O2 + AH2 = A + 2 H2O. It catalyses the reaction 2 H2O2 = O2 + 2 H2O. Bifunctional enzyme with both catalase and broad-spectrum peroxidase activity. In Pelobacter propionicus (strain DSM 2379 / NBRC 103807 / OttBd1), this protein is Catalase-peroxidase.